The chain runs to 192 residues: U1 small nuclear ribonucleoprotein C (192 aa).

The Matrin-type zinc-finger motif lies at 4-36 (YYCEYCDIYLTHSSPVGRRQHNQGRKHISAKIE). A disordered region spans residues 118 to 192 (PGANKYPNNN…FVNKNSEQPN (75 aa)). Residues 133 to 154 (RISNTPKPYNNYTNKPITNSPY) show a composition bias toward polar residues. The segment covering 164–173 (NNENSNNFSN) has biased composition (low complexity). Over residues 174 to 192 (YQMNKDNSNFVNKNSEQPN) the composition is skewed to polar residues.

Belongs to the U1 small nuclear ribonucleoprotein C family. As to quaternary structure, U1 snRNP is composed of the 7 core Sm proteins B/B', D1, D2, D3, E, F and G that assemble in a heptameric protein ring on the Sm site of the small nuclear RNA to form the core snRNP, and at least 3 U1 snRNP-specific proteins U1-70K, U1-A and U1-C. U1-C interacts with U1 snRNA and the 5' splice-site region of the pre-mRNA.

Its subcellular location is the nucleus. In terms of biological role, component of the spliceosomal U1 snRNP, which is essential for recognition of the pre-mRNA 5' splice-site and the subsequent assembly of the spliceosome. U1-C is directly involved in initial 5' splice-site recognition for both constitutive and regulated alternative splicing. The interaction with the 5' splice-site seems to precede base-pairing between the pre-mRNA and the U1 snRNA. Stimulates commitment or early (E) complex formation by stabilizing the base pairing of the 5' end of the U1 snRNA and the 5' splice-site region. The sequence is that of U1 small nuclear ribonucleoprotein C from Plasmodium chabaudi chabaudi.